Consider the following 270-residue polypeptide: Protein-ADP-ribose hydrolase (270 aa).

The Macro domain occupies 73–267; that stretch reads VSVKDCQKTN…LYDTYLQKEN (195 aa). ADP-D-ribose is bound by residues D92, I93, and N106. Residues C112, H117, and C119 each contribute to the Zn(2+) site. Residues C119, I120, D121, S212, T213, G214, E215, and F216 each contribute to the ADP-D-ribose site.

The protein belongs to the MacroD-type family. Zn-Macro subfamily. Monomer. Interacts with the lipoylated form of GcvH-L. Zn(2+) serves as cofactor.

The enzyme catalyses 4-O-(ADP-D-ribosyl)-L-aspartyl-[protein] + H2O = L-aspartyl-[protein] + ADP-D-ribose + H(+). The catalysed reaction is 5-O-(ADP-D-ribosyl)-L-glutamyl-[protein] + H2O = L-glutamyl-[protein] + ADP-D-ribose + H(+). It catalyses the reaction S-(ADP-D-ribosyl)-L-cysteinyl-[protein] + H2O = ADP-D-ribose + L-cysteinyl-[protein]. In terms of biological role, ADP-ribosylhydrolase that specifically reverses the SirTM-mediated mono-ADP-ribosylation at an asparatate residue of GcvH-L (SpyM50867), by releasing ADP-ribose from the target protein. May play a role in the regulation of the response to host-induced oxidative stress. It can also hydrolyze ADP-ribosyl-glutamate bonds and ADP-ribosyl-cysteine bonds. In vitro, it can remove the ADP-ribosyl modification from the human mono-ADP-ribosylated PARP1 E988Q mutant, which is primarily modified on glutamate site with only minor aspartate contribution. It can also hydrolyze the ADP-ribosyl-cysteinyl glycosidic bond of a Cys-ADP-ribosylated synthetic peptide. This Streptococcus pyogenes serotype M5 (strain Manfredo) protein is Protein-ADP-ribose hydrolase.